We begin with the raw amino-acid sequence, 210 residues long: MLGNKNISMAVIRRLPKYHRYLGDLLDRDIQRISSKELSDIIGFTASQIRQDLNNFGGFGQQGYGYNVEALHTEIGKILGLDRPYNAVLVGAGNLGQAIANYAGFRKAGFEIKALFDANPRMIGLKIREFEVLDSDTLEDFIKNNNIDIAVLCIPKNGAQEVINRVVKAGIKGVWNFAPLDLEVPKGVIVENVNLTESLFTLSYLMKEGK.

A DNA-binding region (H-T-H motif) is located at residues 17 to 56; that stretch reads KYHRYLGDLLDRDIQRISSKELSDIIGFTASQIRQDLNNF. An NAD(+)-binding site is contributed by 91–96; the sequence is GAGNLG.

Belongs to the transcriptional regulatory Rex family. As to quaternary structure, homodimer.

It is found in the cytoplasm. In terms of biological role, modulates transcription in response to changes in cellular NADH/NAD(+) redox state. This Clostridioides difficile (strain 630) (Peptoclostridium difficile) protein is Redox-sensing transcriptional repressor Rex.